Reading from the N-terminus, the 87-residue chain is Cell division protein ZapA (87 aa).

A coiled-coil region spans residues 64–87; sequence VHDYIKLKEEYDRLLQKLHKEKDE.

This sequence belongs to the ZapA family. Type 2 subfamily. Homodimer. Interacts with FtsZ.

Its subcellular location is the cytoplasm. Activator of cell division through the inhibition of FtsZ GTPase activity, therefore promoting FtsZ assembly into bundles of protofilaments necessary for the formation of the division Z ring. It is recruited early at mid-cell but it is not essential for cell division. The sequence is that of Cell division protein ZapA from Geobacillus sp. (strain WCH70).